The sequence spans 438 residues: Dihydroorotase (438 aa).

Zn(2+) is bound by residues His58 and His60. Substrate-binding positions include 60 to 62 (HLR) and Asn92. Residues Asp152, His179, and His232 each coordinate Zn(2+). Asn278 contributes to the substrate binding site. A Zn(2+)-binding site is contributed by Asp305. Residue Asp305 is part of the active site. Residues His309 and 323 to 324 (FG) each bind substrate.

The protein belongs to the metallo-dependent hydrolases superfamily. DHOase family. Class I DHOase subfamily. Zn(2+) serves as cofactor.

It carries out the reaction (S)-dihydroorotate + H2O = N-carbamoyl-L-aspartate + H(+). Its pathway is pyrimidine metabolism; UMP biosynthesis via de novo pathway; (S)-dihydroorotate from bicarbonate: step 3/3. Its function is as follows. Catalyzes the reversible cyclization of carbamoyl aspartate to dihydroorotate. This is Dihydroorotase from Leifsonia xyli subsp. xyli (strain CTCB07).